We begin with the raw amino-acid sequence, 198 residues long: B9 domain-containing protein 1 (198 aa).

A C2 B9-type domain is found at 8–126 (FLLNVSGQIE…TIPMFVPESS (119 aa)).

The protein belongs to the B9D family. As to quaternary structure, part of the tectonic-like complex (also named B9 complex).

The protein localises to the cytoplasm. Its subcellular location is the cytoskeleton. The protein resides in the cilium basal body. In terms of biological role, component of the tectonic-like complex, a complex localized at the transition zone of primary cilia and acting as a barrier that prevents diffusion of transmembrane proteins between the cilia and plasma membranes. Required for ciliogenesis and sonic hedgehog/SHH signaling. The protein is B9 domain-containing protein 1 (b9d1) of Xenopus laevis (African clawed frog).